A 305-amino-acid polypeptide reads, in one-letter code: Phospho-N-acetylmuramoyl-pentapeptide-transferase (305 aa).

9 helical membrane passes run 1–21 (MLMV…RASK), 46–66 (AGGV…YLSG), 73–93 (ELLI…DDWL), 113–133 (FPLQ…LASH), 139–159 (LGPV…VNAF), 174–194 (IIVL…VAVL), 207–227 (VFMG…AYIL), 233–253 (LLPI…IQVI), and 282–302 (VTIR…WLLG).

Belongs to the glycosyltransferase 4 family. MraY subfamily. It depends on Mg(2+) as a cofactor.

It is found in the cell membrane. It catalyses the reaction UDP-N-acetyl-alpha-D-muramoyl-L-alanyl-gamma-D-glutamyl-meso-2,6-diaminopimeloyl-D-alanyl-D-alanine + di-trans,octa-cis-undecaprenyl phosphate = di-trans,octa-cis-undecaprenyl diphospho-N-acetyl-alpha-D-muramoyl-L-alanyl-D-glutamyl-meso-2,6-diaminopimeloyl-D-alanyl-D-alanine + UMP. It participates in cell wall biogenesis; peptidoglycan biosynthesis. In terms of biological role, catalyzes the initial step of the lipid cycle reactions in the biosynthesis of the cell wall peptidoglycan: transfers peptidoglycan precursor phospho-MurNAc-pentapeptide from UDP-MurNAc-pentapeptide onto the lipid carrier undecaprenyl phosphate, yielding undecaprenyl-pyrophosphoryl-MurNAc-pentapeptide, known as lipid I. The chain is Phospho-N-acetylmuramoyl-pentapeptide-transferase from Deinococcus deserti (strain DSM 17065 / CIP 109153 / LMG 22923 / VCD115).